A 262-amino-acid chain; its full sequence is MSGQNSENFIKMHGTGNNFVIIDSCSANDLNWNYKKIANQNGCDQVIVITNSSLADCFMHIYNADGSKAEMCGNAARCVGYLLMSEKGTEYITIELVNKRILECFKVGDKSIKVNMGKPLLKWHKIPLSTECDTLHLPIELEMLKDPVAVNIGNPHIVFFVDSVNEIPLQSLGPKLENHALFPQKINISIAQVEKSGEIALRVWERGTGITASCGSAACAALVTSTLRGYLTVQQTSVNLPGGKLLIEWANNVFMTGDIGFL.

Substrate-binding residues include Asn17, Gln45, and Asn63. The active-site Proton donor is Cys72. Residues 73–74, Asn154, Asn187, and 205–206 each bind substrate; these read GN and ER. Cys214 functions as the Proton acceptor in the catalytic mechanism. Position 215 to 216 (215 to 216) interacts with substrate; it reads GS.

Belongs to the diaminopimelate epimerase family. As to quaternary structure, homodimer.

It is found in the cytoplasm. It catalyses the reaction (2S,6S)-2,6-diaminopimelate = meso-2,6-diaminopimelate. The protein operates within amino-acid biosynthesis; L-lysine biosynthesis via DAP pathway; DL-2,6-diaminopimelate from LL-2,6-diaminopimelate: step 1/1. Catalyzes the stereoinversion of LL-2,6-diaminopimelate (L,L-DAP) to meso-diaminopimelate (meso-DAP), a precursor of L-lysine and an essential component of the bacterial peptidoglycan. This chain is Diaminopimelate epimerase, found in Wolbachia sp. subsp. Drosophila simulans (strain wRi).